The following is a 209-amino-acid chain: Hyperpolarization-activated voltage-gated potassium channel (209 aa).

At 1–10 (MNLKDRRLKK) the chain is on the cytoplasmic side. A helical transmembrane segment spans residues 11 to 31 (IMEVLSLIFTFEIVASFILST). Residues 32 to 38 (YNPPYQD) lie on the Extracellular side of the membrane. The chain crosses the membrane as a helical span at residues 39 to 59 (LLIKLDYISIMFFTFEFIYNF). The Cytoplasmic portion of the chain corresponds to 60–71 (YYVEDKAKFFKD). A helical membrane pass occupies residues 72–92 (IYNIVDAIVVIAFLLYSLQVF). Over 93–96 (YSKA) the chain is Extracellular. A helical; Voltage-sensor transmembrane segment spans residues 97–117 (FLGLRVINLLRILVLLRIIKL). Residues 118 to 125 (RKLEENQA) lie on the Cytoplasmic side of the membrane. The chain crosses the membrane as a helical span at residues 126-146 (LINFLTLLTICFIASCLIWIV). Residues 147–181 (ESGVNPAINNFFDAFYFTTISITTVGYGDITPKTD) are Extracellular-facing. The short motif at 170-175 (TVGYGD) is the Selectivity filter element. A helical membrane pass occupies residues 182-202 (AGKLIIIFSVLFFISGLITSL). Residues 203 to 209 (QKALKGD) lie on the Cytoplasmic side of the membrane.

This sequence belongs to the potassium channel family. Homotetramer.

The protein resides in the cell membrane. In terms of biological role, voltage-gated potassium-selective channel opened by hyperpolarization. The protein is Hyperpolarization-activated voltage-gated potassium channel (mvp) of Methanocaldococcus jannaschii (strain ATCC 43067 / DSM 2661 / JAL-1 / JCM 10045 / NBRC 100440) (Methanococcus jannaschii).